A 546-amino-acid polypeptide reads, in one-letter code: Glucose-6-phosphate isomerase (546 aa).

Glutamate 353 (proton donor) is an active-site residue. Residues histidine 384 and lysine 512 contribute to the active site.

It belongs to the GPI family.

The protein localises to the cytoplasm. It carries out the reaction alpha-D-glucose 6-phosphate = beta-D-fructose 6-phosphate. It participates in carbohydrate biosynthesis; gluconeogenesis. The protein operates within carbohydrate degradation; glycolysis; D-glyceraldehyde 3-phosphate and glycerone phosphate from D-glucose: step 2/4. Its function is as follows. Catalyzes the reversible isomerization of glucose-6-phosphate to fructose-6-phosphate. This chain is Glucose-6-phosphate isomerase, found in Actinobacillus pleuropneumoniae serotype 5b (strain L20).